The sequence spans 471 residues: NALCN channel auxiliary factor 2 (471 aa).

A helical transmembrane segment spans residues 47–67; that stretch reads LASLLFFTVLLADHLWLCAGA. The tract at residues 76–115 is disordered; that stretch reads SAMRPPWGAGRERQPVPPRAVLPPPPPSPGEPSASSGTCG. A compositionally biased stretch (pro residues) spans 90–105; sequence PVPPRAVLPPPPPSPG. The N-linked (GlcNAc...) asparagine glycan is linked to Asn120. Disordered regions lie at residues 158 to 178 and 399 to 424; these read EPTTPAPPLRPPDSPSRAPEF and HYHPRHEPPSRVSNKPSLLPVSGGSR. Pro residues predominate over residues 161-171; it reads TPAPPLRPPDS. Residues 432–452 form a helical membrane-spanning segment; that stretch reads LCVLVLILLHTVVSFSSSQSG.

It belongs to the NALF family.

The protein resides in the membrane. Its function is as follows. Probable component of the NALCN channel complex, a channel that regulates the resting membrane potential and controls neuronal excitability. The sequence is that of NALCN channel auxiliary factor 2 (Nalf2) from Mus musculus (Mouse).